The chain runs to 406 residues: Argininosuccinate synthase (406 aa).

ATP is bound by residues 13-21 and Ala40; that span reads AYSGGLDTS. Residues Tyr91 and Ser96 each contribute to the L-citrulline site. Gly121 provides a ligand contact to ATP. The L-aspartate site is built by Thr123, Asn127, and Asp128. Residue Asn127 coordinates L-citrulline. Residues Arg131, Ser182, Ser191, Glu267, and Tyr279 each coordinate L-citrulline.

The protein belongs to the argininosuccinate synthase family. Type 1 subfamily. Homotetramer.

The protein resides in the cytoplasm. It carries out the reaction L-citrulline + L-aspartate + ATP = 2-(N(omega)-L-arginino)succinate + AMP + diphosphate + H(+). It participates in amino-acid biosynthesis; L-arginine biosynthesis; L-arginine from L-ornithine and carbamoyl phosphate: step 2/3. The protein is Argininosuccinate synthase of Brucella abortus (strain S19).